Here is a 238-residue protein sequence, read N- to C-terminus: Large ribosomal subunit protein uL5c (238 aa).

Belongs to the universal ribosomal protein uL5 family. Part of the 50S ribosomal subunit; contacts the 5S rRNA.

It localises to the plastid. The protein resides in the chloroplast. Its function is as follows. Binds 5S rRNA, forms part of the central protuberance of the 50S subunit. The protein is Large ribosomal subunit protein uL5c (rpl5) of Thalassiosira pseudonana (Marine diatom).